A 459-amino-acid polypeptide reads, in one-letter code: GTPase Der (459 aa).

EngA-type G domains are found at residues F3–V167 and I188–N363. Residues G9–S16, D56–L60, N119–E122, G194–S201, D241–L245, and N306–D309 each bind GTP. Positions R364–A448 constitute a KH-like domain.

The protein belongs to the TRAFAC class TrmE-Era-EngA-EngB-Septin-like GTPase superfamily. EngA (Der) GTPase family. As to quaternary structure, associates with the 50S ribosomal subunit.

In terms of biological role, GTPase that plays an essential role in the late steps of ribosome biogenesis. The chain is GTPase Der from Rhodopseudomonas palustris (strain TIE-1).